The chain runs to 255 residues: Pimeloyl-[acyl-carrier protein] methyl ester esterase (255 aa).

The 227-residue stretch at 16–242 folds into the AB hydrolase-1 domain; that stretch reads LVLLHGWGLN…AAHAPFISHP (227 aa). Substrate is bound by residues W22, 82 to 83, and 143 to 147; these read SL and FLALQ. S82 (nucleophile) is an active-site residue. Active-site residues include D207 and H235. H235 is a substrate binding site.

This sequence belongs to the AB hydrolase superfamily. Carboxylesterase BioH family. As to quaternary structure, monomer.

It is found in the cytoplasm. The enzyme catalyses 6-carboxyhexanoyl-[ACP] methyl ester + H2O = 6-carboxyhexanoyl-[ACP] + methanol + H(+). The protein operates within cofactor biosynthesis; biotin biosynthesis. In terms of biological role, the physiological role of BioH is to remove the methyl group introduced by BioC when the pimeloyl moiety is complete. It allows to synthesize pimeloyl-ACP via the fatty acid synthetic pathway through the hydrolysis of the ester bonds of pimeloyl-ACP esters. The sequence is that of Pimeloyl-[acyl-carrier protein] methyl ester esterase from Pectobacterium atrosepticum (strain SCRI 1043 / ATCC BAA-672) (Erwinia carotovora subsp. atroseptica).